The primary structure comprises 186 residues: Protein SPMIP2 (186 aa).

The tract at residues 163–186 (SSLPRASKPPKLPKLPKKEKKRKH) is disordered. Residues 176–186 (KLPKKEKKRKH) show a composition bias toward basic residues.

In Homo sapiens (Human), this protein is Protein SPMIP2.